The following is a 574-amino-acid chain: Probable glucomannan 4-beta-mannosyltransferase 6 (574 aa).

The chain crosses the membrane as a helical span at residues 87–107 (VVACMVMSVIVLAEKVFLGVV). The active site involves Asp-180. The substrate site is built by Asp-239 and Asp-241. Asp-333 is a catalytic residue. Transmembrane regions (helical) follow at residues 412–432 (IIST…KVFF), 437–457 (IPLW…SVGT), 523–543 (FHCL…YDYL), and 548–568 (IFYI…FEFM).

It belongs to the glycosyltransferase 2 family. Plant cellulose synthase-like A subfamily.

The protein resides in the golgi apparatus membrane. It carries out the reaction GDP-mannose + (glucomannan)n = GDP + (glucomannan)n+1.. Probable mannan synthase which consists of a 4-beta-mannosyltransferase activity on mannan using GDP-mannose. The beta-1,4-mannan product is the backbone for galactomannan synthesis by galactomannan galactosyltransferase. Galactomannan is a noncellulosic polysaccharides of plant cell wall. The chain is Probable glucomannan 4-beta-mannosyltransferase 6 from Oryza sativa subsp. japonica (Rice).